A 366-amino-acid polypeptide reads, in one-letter code: Beta sliding clamp (366 aa).

The interval 1–125 (MKFTVEREHL…FPNLDDWQSE (125 aa)) is i. An II region spans residues 126–253 (VEFTLPQATM…YRRVLPKNPD (128 aa)). Residues 254 to 366 (KHLEAGCDLL…AAYVVMPMRL (113 aa)) form an III region.

This sequence belongs to the beta sliding clamp family. As to quaternary structure, forms a ring-shaped head-to-tail homodimer around DNA which binds and tethers DNA polymerases and other proteins to the DNA. The DNA replisome complex has a single clamp-loading complex (3 tau and 1 each of delta, delta', psi and chi subunits) which binds 3 Pol III cores (1 core on the leading strand and 2 on the lagging strand) each with a beta sliding clamp dimer. Additional proteins in the replisome are other copies of gamma, psi and chi, Ssb, DNA helicase and RNA primase.

The protein resides in the cytoplasm. Functionally, confers DNA tethering and processivity to DNA polymerases and other proteins. Acts as a clamp, forming a ring around DNA (a reaction catalyzed by the clamp-loading complex) which diffuses in an ATP-independent manner freely and bidirectionally along dsDNA. Initially characterized for its ability to contact the catalytic subunit of DNA polymerase III (Pol III), a complex, multichain enzyme responsible for most of the replicative synthesis in bacteria; Pol III exhibits 3'-5' exonuclease proofreading activity. The beta chain is required for initiation of replication as well as for processivity of DNA replication. The sequence is that of Beta sliding clamp (dnaN) from Escherichia coli O157:H7.